Here is a 117-residue protein sequence, read N- to C-terminus: UPF0251 protein DET0218 (117 aa).

The protein belongs to the UPF0251 family.

This Dehalococcoides mccartyi (strain ATCC BAA-2266 / KCTC 15142 / 195) (Dehalococcoides ethenogenes (strain 195)) protein is UPF0251 protein DET0218.